The chain runs to 493 residues: Na(+)/H(+) antiporter subunit D (493 aa).

The next 15 helical transmembrane spans lie at 3–23 (NFVI…IFMT), 31–51 (IFST…VQTV), 77–97 (FASL…LYSF), 107–127 (SFYY…FLTG), 129–149 (LFNM…LIVL), 163–183 (IVFN…LYAV), 203–223 (GLIT…GGIF), 227–247 (FWLP…FGAL), 251–271 (VGLY…TAFT), 274–294 (LMIW…LAYS), 299–319 (IVIY…AVHT), 330–350 (LIHD…LIAL), 370–390 (GWMF…SGFV), 407–427 (ISML…RIFI), and 449–469 (LYPA…TEWV).

Belongs to the CPA3 antiporters (TC 2.A.63) subunit D family. Forms a heterooligomeric complex that consists of seven subunits: MrpA, MrpB, MrpC, MrpD, MrpE, MrpF and MrpG.

The protein resides in the cell membrane. In terms of biological role, mrp complex is a Na(+)/H(+) antiporter that is considered to be the major Na(+) excretion system in B.subtilis. Has a major role in Na(+) resistance and a minor role in Na(+)- and K(+)-dependent pH homeostasis as compared to TetB. MrpA may be the actual Na(+)/H(+) antiporter, although the six other Mrp proteins are all required for Na(+)/H(+) antiport activity and Na(+) resistance. MrpA is required for initiation of sporulation when external Na(+) concentration increases. Also transports Li(+) but not K(+), Ca(2+) or Mg(2+). This chain is Na(+)/H(+) antiporter subunit D (mrpD), found in Bacillus subtilis (strain 168).